Reading from the N-terminus, the 237-residue chain is Putative N-acetylmannosamine-6-phosphate 2-epimerase (237 aa).

The protein belongs to the NanE family.

It carries out the reaction an N-acyl-D-glucosamine 6-phosphate = an N-acyl-D-mannosamine 6-phosphate. The protein operates within amino-sugar metabolism; N-acetylneuraminate degradation; D-fructose 6-phosphate from N-acetylneuraminate: step 3/5. Functionally, converts N-acetylmannosamine-6-phosphate (ManNAc-6-P) to N-acetylglucosamine-6-phosphate (GlcNAc-6-P). The chain is Putative N-acetylmannosamine-6-phosphate 2-epimerase from Caldanaerobacter subterraneus subsp. tengcongensis (strain DSM 15242 / JCM 11007 / NBRC 100824 / MB4) (Thermoanaerobacter tengcongensis).